A 1692-amino-acid polypeptide reads, in one-letter code: Tyrosine-protein phosphatase non-receptor type 23 (1692 aa).

One can recognise a BRO1 domain in the interval 8 to 394 (PMIWLDLKEA…AKIEDKNEVL (387 aa)). TPR repeat units follow at residues 250–283 (AVAHLHMGKQAEEQQKFGERVAYFQSALDKLNEA) and 374–407 (EEKAKLLREMLAKIEDKNEVLDQFMDSMQLDPET). A coiled-coil region spans residues 552–639 (KAVLQNLKRI…RALTEANVQY (88 aa)). 3 disordered regions span residues 711 to 788 (DREL…PATH), 884 to 923 (DSVQAPISSHTAPRPNPTPALPQPCFPVPQPVPQSVPQPQ), and 944 to 1199 (TYSI…LLQP). Phosphothreonine is present on Thr-744. The tract at residues 773-1186 (HFSPGPFPSS…SSSPESQHGG (414 aa)) is his. Residues 774-785 (FSPGPFPSSTGP) show a composition bias toward low complexity. The segment covering 884 to 894 (DSVQAPISSHT) has biased composition (polar residues). Residues 897–923 (RPNPTPALPQPCFPVPQPVPQSVPQPQ) show a composition bias toward pro residues. Position 974 is an omega-N-methylarginine (Arg-974). A run of 21 repeats spans residues 977–978 (PQ), 979–980 (AQ), 981–982 (AQ), 983–984 (PQ), 985–986 (PQ), 987–988 (PQ), 989–990 (PQ), 991–992 (PQ), 993–994 (PQ), 995–996 (PQ), 997–998 (PQ), 999–1000 (PQ), 1001–1002 (PQ), 1003–1004 (PQ), 1005–1006 (SQ), 1007–1008 (SQ), 1009–1010 (PQ), 1011–1012 (PQ), 1013–1014 (PQ), 1015–1016 (PQ), and 1017–1018 (PQ). The segment at 977–1018 (PQAQAQPQPQPQPQPQPQPQPQPQPQPQSQSQPQPQPQPQPQ) is 21 X 2 AA approximate tandem repeats of P-Q. A compositionally biased stretch (pro residues) spans 984–1002 (QPQPQPQPQPQPQPQPQPQ). Pro residues-rich tracts occupy residues 1093–1102 (FPSPGPPHPH) and 1127–1165 (GPPPASQPTPSPHLVPSPAPSPGPGPVPSRPPTAEPPPC). Ser-1178 and Ser-1179 each carry phosphoserine. The residue at position 1187 (Thr-1187) is a Phosphothreonine. One can recognise a Tyrosine-protein phosphatase domain in the interval 1248-1508 (DAIWRELQEA…KFCHEALVRH (261 aa)). Residue Cys-1448 is the Phosphocysteine intermediate of the active site. Residues 1574 to 1638 (ASLPGLVEPP…PSSSLELLAS (65 aa)) are disordered. A compositionally biased stretch (pro residues) spans 1598 to 1612 (SSSPPPLSSPLPEAP). Residues 1620-1638 (VPEAPSLGPPSSSLELLAS) are compositionally biased toward low complexity. Arg-1671 is subject to Omega-N-methylarginine.

It belongs to the protein-tyrosine phosphatase family. Non-receptor class subfamily. As to quaternary structure, interacts with GRAP2 and GRB2. Interacts with UBAP1 and CHMP4B.

It is found in the nucleus. The protein localises to the cytoplasm. Its subcellular location is the cytoplasmic vesicle. The protein resides in the endosome. It localises to the cytoskeleton. It is found in the cilium basal body. It catalyses the reaction O-phospho-L-tyrosyl-[protein] + H2O = L-tyrosyl-[protein] + phosphate. In terms of biological role, plays a role in sorting of endocytic ubiquitinated cargos into multivesicular bodies (MVBs) via its interaction with the ESCRT-I complex (endosomal sorting complex required for transport I), and possibly also other ESCRT complexes. May act as a negative regulator of Ras-mediated mitogenic activity. Plays a role in ciliogenesis. This Mus musculus (Mouse) protein is Tyrosine-protein phosphatase non-receptor type 23 (Ptpn23).